A 24-amino-acid chain; its full sequence is Coenzyme PQQ synthesis protein A (24 aa).

A cross-link (pyrroloquinoline quinone (Glu-Tyr)) is located at residues 16–20; that stretch reads EVTMY.

This sequence belongs to the PqqA family.

It functions in the pathway cofactor biosynthesis; pyrroloquinoline quinone biosynthesis. Its function is as follows. Required for coenzyme pyrroloquinoline quinone (PQQ) biosynthesis. PQQ is probably formed by cross-linking a specific glutamate to a specific tyrosine residue and excising these residues from the peptide. The chain is Coenzyme PQQ synthesis protein A from Pseudomonas syringae pv. syringae (strain B728a).